The sequence spans 181 residues: Protein Syd (181 aa).

This sequence belongs to the Syd family.

It localises to the cell inner membrane. Functionally, interacts with the SecY protein in vivo. May bind preferentially to an uncomplexed state of SecY, thus functioning either as a chelating agent for excess SecY in the cell or as a regulatory factor that negatively controls the translocase function. In Enterobacter sp. (strain 638), this protein is Protein Syd.